The sequence spans 349 residues: Small ribosomal subunit biogenesis GTPase RsgA (349 aa).

The segment covering 1–11 has biased composition (basic residues); the sequence is MSKKKLSKGQQ. A disordered region spans residues 1-35; that stretch reads MSKKKLSKGQQRRVSANHQRRLKHADSKVEWDDSQ. In terms of domain architecture, CP-type G spans 111–272; sequence YDGLKPIAAN…VIDSPGVREF (162 aa). GTP-binding positions include 158–161 and 212–220; these read NKID and GQSGVGKSS. Positions 296, 301, 303, and 309 each coordinate Zn(2+).

Belongs to the TRAFAC class YlqF/YawG GTPase family. RsgA subfamily. In terms of assembly, monomer. Associates with 30S ribosomal subunit, binds 16S rRNA. It depends on Zn(2+) as a cofactor.

Its subcellular location is the cytoplasm. In terms of biological role, one of several proteins that assist in the late maturation steps of the functional core of the 30S ribosomal subunit. Helps release RbfA from mature subunits. May play a role in the assembly of ribosomal proteins into the subunit. Circularly permuted GTPase that catalyzes slow GTP hydrolysis, GTPase activity is stimulated by the 30S ribosomal subunit. The chain is Small ribosomal subunit biogenesis GTPase RsgA from Dickeya dadantii (strain 3937) (Erwinia chrysanthemi (strain 3937)).